Reading from the N-terminus, the 653-residue chain is N-acetylglucosaminyl-phosphatidylinositol biosynthetic protein gpi1 (653 aa).

Transmembrane regions (helical) follow at residues 43-63 (LIVV…VDYC), 237-257 (SLFA…LLAI), 327-347 (IFGI…VKLI), 382-402 (FIMK…LHCL), 407-427 (FLVQ…IALI), 485-505 (LLLG…IYVF), 520-540 (LAIC…VTML), and 605-625 (LISL…LYNI).

Its subcellular location is the membrane. The protein operates within glycolipid biosynthesis; glycosylphosphatidylinositol-anchor biosynthesis. Functionally, necessary for the synthesis of N-acetylglucosaminyl-phosphatidylinositol, the very early intermediate in GPI-anchor biosynthesis. The chain is N-acetylglucosaminyl-phosphatidylinositol biosynthetic protein gpi1 (gpi1) from Schizosaccharomyces pombe (strain 972 / ATCC 24843) (Fission yeast).